The chain runs to 157 residues: Transcription elongation factor GreA (157 aa).

The protein belongs to the GreA/GreB family.

In terms of biological role, necessary for efficient RNA polymerase transcription elongation past template-encoded arresting sites. The arresting sites in DNA have the property of trapping a certain fraction of elongating RNA polymerases that pass through, resulting in locked ternary complexes. Cleavage of the nascent transcript by cleavage factors such as GreA or GreB allows the resumption of elongation from the new 3'terminus. GreA releases sequences of 2 to 3 nucleotides. This Maricaulis maris (strain MCS10) (Caulobacter maris) protein is Transcription elongation factor GreA.